An 81-amino-acid polypeptide reads, in one-letter code: MIKRIVVTEKALRLAEKENKITLIVDRGATKKQIAEEVERLYNVKVEKVNTLITPRGEKKAYVKLTKEHNAMDLLSKLGVL.

It belongs to the universal ribosomal protein uL23 family. In terms of assembly, part of the 50S ribosomal subunit. Contacts protein L29.

In terms of biological role, binds to 23S rRNA. One of the proteins that surrounds the polypeptide exit tunnel on the outside of the ribosome. In Pyrobaculum aerophilum (strain ATCC 51768 / DSM 7523 / JCM 9630 / CIP 104966 / NBRC 100827 / IM2), this protein is Large ribosomal subunit protein uL23.